The chain runs to 113 residues: Propane 2-monooxygenase, effector component (113 aa).

This sequence belongs to the TmoD/XamoD family. The propane 2-monooxygenase multicomponent enzyme system is composed of an electron transfer component and a monooxygenase component interacting with the effector protein PrmD. The electron transfer component is composed of a reductase (PrmB), and the monooxygenase component is formed by a large subunit (PrmA) and a small subunit (PrmC).

In terms of biological role, effector component of the propane 2-monooxygenase multicomponent enzyme system which is involved in the degradation of propane via the O2-dependent hydroxylation of propane. The chain is Propane 2-monooxygenase, effector component from Rhodococcus jostii (strain RHA1).